An 815-amino-acid chain; its full sequence is Cell division cycle protein 48 (815 aa).

The segment at 1 to 30 is disordered; it reads MNAPSTMTDKKPEVEHLQGENPPKDTYSAE. The span at 8-18 shows a compositional bias: basic and acidic residues; that stretch reads TDKKPEVEHLQ. Residues 267-273, Asn368, His404, and 541-546 contribute to the ATP site; these read PGTGKTL and GTGKTL. Residues 794 to 815 form a disordered region; sequence DSADSNTNGPSFGNDGADDLYA. Residues 795-804 are compositionally biased toward polar residues; it reads SADSNTNGPS.

This sequence belongs to the AAA ATPase family. In terms of assembly, component of the ribosome quality control complex (RQC), composed of the E3 ubiquitin ligase rkr1/ltn1, rqc1 and mtr1/rqc2, as well as cdc48 and its ubiquitin-binding cofactors. RQC forms a stable complex with 60S ribosomal subunits. Interacts with ubx2 and ubx3. Interacts with lub1. Interacts with rbd2 (via C-terminal SHP box); the interaction is required for rbd2-mediated cleavage of sre1 and sre2.

Its subcellular location is the cytoplasm. It is found in the nucleus. It catalyses the reaction ATP + H2O = ADP + phosphate + H(+). Its activity is regulated as follows. The first ATP-binding region has low ATPase activity. The second ATP-binding region is responsible for ATPase activity. ATP binding to the first ATP-binding region induces intrinsic activity of the second ATP-binding region. While ATP binding to the first ATP-binding region appears to prevent ATP hydrolysis by the second ATP-binding region, ADP-binding to first region promotes the coordinate and cooperative ATPase cycle of the second ATP-binding region. ATP binding to the first ATP-binding region induces a conformational change, promoting the rotation of the first ATP-binding region relative to the second ATP-binding region in the hexamer. ATP-dependent chaperone which probably uses the energy provided by ATP hydrolysis to generate mechanical force to unfold substrate proteins, disassemble protein complexes, and disaggregate protein aggregates. By recruiting and promoting the degradation of ubiquitinated proteins, plays a role in the ubiquitin fusion degradation (UFD) pathway. Has a role in the endoplasmic reticulum-associated degradation (ERAD) pathway which mediates the cytoplasmic elimination of misfolded proteins exported from the ER. Involved in spindle disassembly. Component of the ribosome quality control complex (RQC), a ribosome-associated complex that mediates ubiquitination and extraction of incompletely synthesized nascent chains for proteasomal degradation. CDC48 may provide the mechanical force that dislodges the polyubiquitinated nascent peptides from the exit channel. Required for ribophagy, a process which relocalizes ribosomal particles into the vacuole for degradation in response to starvation. Has a role in substrate recognition mediating rbd2-dependent cleavage of sterol regulatory element-binding protein sre1 and sre2. This is Cell division cycle protein 48 from Schizosaccharomyces pombe (strain 972 / ATCC 24843) (Fission yeast).